A 370-amino-acid chain; its full sequence is F-box protein At3g20690 (370 aa).

The region spanning 1 to 45 (MMMSDLPHDLVEEILSRLPLISLKAMRSTCKTWNVLSKHRSFANK) is the F-box domain.

This Arabidopsis thaliana (Mouse-ear cress) protein is F-box protein At3g20690.